The sequence spans 242 residues: Probable inactive serine protease 58 (242 aa).

The signal sequence occupies residues 1–17 (MNLILLWALLNLPVALT). A Peptidase S1 domain is found at 18–240 (FDPNYKDDIT…YIPWIENTIQ (223 aa)). 4 cysteine pairs are disulfide-bonded: C41–C57, C134–C202, C166–C181, and C192–C216. N-linked (GlcNAc...) asparagine glycosylation occurs at N157.

It belongs to the peptidase S1 family.

The protein resides in the secreted. The sequence is that of Probable inactive serine protease 58 (PRSS58) from Bos taurus (Bovine).